The following is a 147-amino-acid chain: Delta-latroinsectotoxin-Lhe1a (147 aa).

4 ANK repeats span residues 57 to 59 (VSI), 66 to 78 (NNWTPLHFAIYFK), 79 to 96 (KNPAVSAVLILENKDIEA), and 98 to 125 (TSIMLIVQKLLLELYNYFINNYAETLDE).

The protein belongs to the cationic peptide 01 (latrotoxin) family. 04 (delta-latroinsectotoxin) subfamily. In terms of assembly, homotetramer in membrane. Expressed by the venom gland.

It localises to the secreted. It is found in the target cell membrane. Its function is as follows. Insecticidal presynaptic neurotoxin that induces massive neurotransmitter release at insect (but not vertebrate) neuromuscular junctions. Native toxin forms cation-permeable pores (with high permeability to calcium) in lipid membranes locust muscle membrane and artificial lipid bilayers. May bind to insect neurexin-1 homolog, insect adhesion G protein-coupled receptor L1 homolog, and insect receptor-type tyrosine-protein phosphatase S homolog, and induces neurotransmitter exocytosis both by forming tetrameric pores in membranes and signaling via G protein-coupled receptor. Oligomerization is a process independent of divalent cations. The chain is Delta-latroinsectotoxin-Lhe1a from Latrodectus hesperus (Western black widow spider).